Here is a 266-residue protein sequence, read N- to C-terminus: MLTYPQIDPVALAIGPLKIHWYGLMYLIGIGGAWLLASRRMKRFDPSWTKERLSDLVFWVACGVILGGRLGYVLFYNLDEYIANPTLIFEVWKGGMSFHGGLLGVMLAVWWFGKRHGKSFFQLMDFIAPLVPIGLGAGRIGNFINSELWGKVSDVPWAMVFPNGGPLPRHPSQLYQFALEGVALFVILWLFTRKPRPTASVSGLFVLCYGIFRFVVEFVRVPDAQLGYLAWGWLTMGQVLCVPMVLAGIALMVWAYRRDAAQPKAA.

7 consecutive transmembrane segments (helical) span residues 10–30 (VALA…LIGI), 56–76 (LVFW…VLFY), 92–112 (WKGG…VWWF), 120–140 (FFQL…AGRI), 171–191 (PSQL…LWLF), 199–219 (ASVS…VEFV), and 233–253 (WLTM…ALMV). Arg139 is an a 1,2-diacyl-sn-glycero-3-phospho-(1'-sn-glycerol) binding site.

This sequence belongs to the Lgt family.

It localises to the cell inner membrane. It catalyses the reaction L-cysteinyl-[prolipoprotein] + a 1,2-diacyl-sn-glycero-3-phospho-(1'-sn-glycerol) = an S-1,2-diacyl-sn-glyceryl-L-cysteinyl-[prolipoprotein] + sn-glycerol 1-phosphate + H(+). The protein operates within protein modification; lipoprotein biosynthesis (diacylglyceryl transfer). In terms of biological role, catalyzes the transfer of the diacylglyceryl group from phosphatidylglycerol to the sulfhydryl group of the N-terminal cysteine of a prolipoprotein, the first step in the formation of mature lipoproteins. This chain is Phosphatidylglycerol--prolipoprotein diacylglyceryl transferase, found in Pseudomonas paraeruginosa (strain DSM 24068 / PA7) (Pseudomonas aeruginosa (strain PA7)).